The sequence spans 511 residues: DNA nucleotidylexotransferase (511 aa).

Residues methionine 1 to threonine 26 are disordered. The Nuclear localization signal motif lies at proline 11–arginine 17. The 98-residue stretch at proline 27–glutamine 124 folds into the BRCT domain. Serine 134 is subject to Phosphoserine. Residues serine 151–alanine 511 form a mediates interaction with DNTTIP2 region. Residues valine 258 to threonine 262 form an involved in DNA binding region. A 2'-deoxyribonucleoside 5'-triphosphate contacts are provided by residues glycine 333–lysine 338 and histidine 342–aspartate 345. The Mg(2+) site is built by aspartate 343, aspartate 345, and aspartate 435. Residue glycine 450–tryptophan 451 participates in a 2'-deoxyribonucleoside 5'-triphosphate binding.

This sequence belongs to the DNA polymerase type-X family. As to quaternary structure, interacts with PRP19 and DNTTIP1. Forms a ternary complex with DNTTIP2 and core histone. Released from this complex by PCNA. Interacts with TRERF1. Mg(2+) is required as a cofactor.

It is found in the nucleus. The enzyme catalyses DNA(n) + a 2'-deoxyribonucleoside 5'-triphosphate = DNA(n+1) + diphosphate. Functionally, template-independent DNA polymerase which catalyzes the random addition of deoxynucleoside 5'-triphosphate to the 3'-end of a DNA initiator. One of the in vivo functions of this enzyme is the addition of nucleotides at the junction (N region) of rearranged Ig heavy chain and T-cell receptor gene segments during the maturation of B- and T-cells. This chain is DNA nucleotidylexotransferase (DNTT), found in Eulemur macaco (Black lemur).